The chain runs to 213 residues: MEQYKRDFIEFALSRNVLKFGEFTLKSGRKSPYFFNAGLFNTGADLARLGEFYAAAIQASAVDFDVVFGPAYKGIPIGTSVSVALFNRYGIDKPVCFNRKEVKDHGEGGNLIGSPLQGKILLVDDVITAGTAIRESMELISANKAELAAVLIALNRKERGKGELSAIQEVERDYQCQVLSIIDLDDLMQFIEQDPRYSSHLPEMRAYRAEFGV.

Lys-26 is a binding site for 5-phospho-alpha-D-ribose 1-diphosphate. Orotate is bound at residue 34–35 (FF). 5-phospho-alpha-D-ribose 1-diphosphate contacts are provided by residues 72 to 73 (YK), Arg-99, Lys-100, Lys-103, His-105, and 124 to 132 (DDVITAGTA). Residues Thr-128 and Arg-156 each coordinate orotate.

The protein belongs to the purine/pyrimidine phosphoribosyltransferase family. PyrE subfamily. As to quaternary structure, homodimer. Mg(2+) serves as cofactor.

The enzyme catalyses orotidine 5'-phosphate + diphosphate = orotate + 5-phospho-alpha-D-ribose 1-diphosphate. Its pathway is pyrimidine metabolism; UMP biosynthesis via de novo pathway; UMP from orotate: step 1/2. Catalyzes the transfer of a ribosyl phosphate group from 5-phosphoribose 1-diphosphate to orotate, leading to the formation of orotidine monophosphate (OMP). In Haemophilus influenzae (strain 86-028NP), this protein is Orotate phosphoribosyltransferase.